Reading from the N-terminus, the 90-residue chain is MSVKIRLTRMGSKKKPFYRINVADSRAPRDGKFIETVGTYNPLVTEEQVTLKEERVLEWLSKGAQPSDTVRNLLSKAGVMKKFHESKLSK.

It belongs to the bacterial ribosomal protein bS16 family.

This Lactococcus lactis subsp. lactis (strain IL1403) (Streptococcus lactis) protein is Small ribosomal subunit protein bS16.